The following is a 358-amino-acid chain: 5-amino-6-(D-ribitylamino)uracil--L-tyrosine 4-hydroxyphenyl transferase 2 (358 aa).

Residues 45-292 (VTFVKNTNIE…ESIKNIQAPR (248 aa)) form the Radical SAM core domain. 3 residues coordinate [4Fe-4S] cluster: C59, C63, and C66.

Belongs to the radical SAM superfamily. CofH family. Consists of two subunits, CofG and CofH. The cofactor is [4Fe-4S] cluster.

It carries out the reaction 5-amino-6-(D-ribitylamino)uracil + L-tyrosine + S-adenosyl-L-methionine = 5-amino-5-(4-hydroxybenzyl)-6-(D-ribitylimino)-5,6-dihydrouracil + 2-iminoacetate + 5'-deoxyadenosine + L-methionine + H(+). It functions in the pathway cofactor biosynthesis; coenzyme F0 biosynthesis. Catalyzes the radical-mediated synthesis of 5-amino-5-(4-hydroxybenzyl)-6-(D-ribitylimino)-5,6-dihydrouracil from 5-amino-6-(D-ribitylamino)uracil and L-tyrosine. The polypeptide is 5-amino-6-(D-ribitylamino)uracil--L-tyrosine 4-hydroxyphenyl transferase 2 (Methanococcus maripaludis (strain DSM 14266 / JCM 13030 / NBRC 101832 / S2 / LL)).